The sequence spans 966 residues: Leucine--tRNA ligase (966 aa).

Residues 71–82 (PYPSGAGLHVGH) carry the 'HIGH' region motif. The segment at 561 to 580 (YSPRTFDPDDADTKPETPLS) is disordered. Positions 571–580 (ADTKPETPLS) are enriched in basic and acidic residues. A 'KMSKS' region motif is present at residues 734 to 738 (KMGKS). Residue Lys-737 coordinates ATP.

Belongs to the class-I aminoacyl-tRNA synthetase family.

It is found in the cytoplasm. The catalysed reaction is tRNA(Leu) + L-leucine + ATP = L-leucyl-tRNA(Leu) + AMP + diphosphate. This is Leucine--tRNA ligase from Streptomyces coelicolor (strain ATCC BAA-471 / A3(2) / M145).